Here is a 365-residue protein sequence, read N- to C-terminus: tRNA-specific 2-thiouridylase MnmA (365 aa).

Residues 14 to 21 (AMSGGVDS) and Leu-40 each bind ATP. Catalysis depends on Cys-108, which acts as the Nucleophile. An intrachain disulfide couples Cys-108 to Cys-204. Gly-132 provides a ligand contact to ATP. Residues 154–156 (KDQ) are interaction with tRNA. Catalysis depends on Cys-204, which acts as the Cysteine persulfide intermediate.

This sequence belongs to the MnmA/TRMU family.

The protein resides in the cytoplasm. It catalyses the reaction S-sulfanyl-L-cysteinyl-[protein] + uridine(34) in tRNA + AH2 + ATP = 2-thiouridine(34) in tRNA + L-cysteinyl-[protein] + A + AMP + diphosphate + H(+). Its function is as follows. Catalyzes the 2-thiolation of uridine at the wobble position (U34) of tRNA, leading to the formation of s(2)U34. This chain is tRNA-specific 2-thiouridylase MnmA, found in Rickettsia peacockii (strain Rustic).